The following is an 81-amino-acid chain: ATP synthase subunit c (81 aa).

2 helical membrane passes run 5 to 25 (IAAG…IGAG) and 57 to 77 (VGLV…FVFA).

This sequence belongs to the ATPase C chain family. As to quaternary structure, F-type ATPases have 2 components, F(1) - the catalytic core - and F(0) - the membrane proton channel. F(1) has five subunits: alpha(3), beta(3), gamma(1), delta(1), epsilon(1). F(0) has three main subunits: a(1), b(2) and c(10-14). The alpha and beta chains form an alternating ring which encloses part of the gamma chain. F(1) is attached to F(0) by a central stalk formed by the gamma and epsilon chains, while a peripheral stalk is formed by the delta and b chains.

The protein resides in the cell membrane. Its function is as follows. F(1)F(0) ATP synthase produces ATP from ADP in the presence of a proton or sodium gradient. F-type ATPases consist of two structural domains, F(1) containing the extramembraneous catalytic core and F(0) containing the membrane proton channel, linked together by a central stalk and a peripheral stalk. During catalysis, ATP synthesis in the catalytic domain of F(1) is coupled via a rotary mechanism of the central stalk subunits to proton translocation. In terms of biological role, key component of the F(0) channel; it plays a direct role in translocation across the membrane. A homomeric c-ring of between 10-14 subunits forms the central stalk rotor element with the F(1) delta and epsilon subunits. The protein is ATP synthase subunit c of Mycobacterium sp. (strain JLS).